Reading from the N-terminus, the 49-residue chain is MGKRKANHTISGMNAASAQGQGAGYNEEFANENLTAAERQNNKKRKKNQ.

The segment at 1-49 (MGKRKANHTISGMNAASAQGQGAGYNEEFANENLTAAERQNNKKRKKNQ) is disordered. Residues 8 to 20 (HTISGMNAASAQG) show a composition bias toward polar residues.

Belongs to the SspO family.

It localises to the spore core. This is Small, acid-soluble spore protein O from Bacillus cereus (strain AH187).